The primary structure comprises 338 residues: MVKAKIAVNGYGTIGKRVADAVRAQDDMEVIGISKTKPNYEAAVAHQIGYDIYAPAANLEAFEKAGMPAAGTIEEMVEKADLVVDCTPGGIGEKNKPMYEKAGVKAIWQGGEDHSLAGFSFNAICNYEQAVGRDLVRVVSCNTTALCRAIYPIDKELGVKKARVVLARRATDPNDVKKGPINAIVPDPIKLPSHHGPDVKSVLPQINITSAALKIPTTLMHVHTVNMEVEKDCTVDDVKNIFGSQPRIRFVGQGMSSTAEIMEFARDMKRPRNDMWENCIWPESITVGDKELYFFQAVHQESIVVPENVDAIRAMMEFESDGAKSIEKTNKAIGLSKK.

NAD(+)-binding positions include 13-14 and G111; that span reads TI. 140–142 provides a ligand contact to D-glyceraldehyde 3-phosphate; it reads SCN. C141 (nucleophile) is an active-site residue. R169 provides a ligand contact to NAD(+). A D-glyceraldehyde 3-phosphate-binding site is contributed by 195–196; the sequence is HG. Q300 is a binding site for NAD(+).

The protein belongs to the glyceraldehyde-3-phosphate dehydrogenase family. In terms of assembly, homotetramer.

It localises to the cytoplasm. It carries out the reaction D-glyceraldehyde 3-phosphate + phosphate + NADP(+) = (2R)-3-phospho-glyceroyl phosphate + NADPH + H(+). The catalysed reaction is D-glyceraldehyde 3-phosphate + phosphate + NAD(+) = (2R)-3-phospho-glyceroyl phosphate + NADH + H(+). Its pathway is carbohydrate degradation; glycolysis; pyruvate from D-glyceraldehyde 3-phosphate: step 1/5. The protein is Glyceraldehyde-3-phosphate dehydrogenase 1 of Methanosarcina barkeri (strain Fusaro / DSM 804).